Reading from the N-terminus, the 115-residue chain is UPF0738 protein SAV1005 (115 aa).

The protein belongs to the UPF0738 family.

This Staphylococcus aureus (strain Mu50 / ATCC 700699) protein is UPF0738 protein SAV1005.